The primary structure comprises 389 residues: S-adenosylmethionine synthase (389 aa).

His17 provides a ligand contact to ATP. Residue Asp19 participates in Mg(2+) binding. Glu45 provides a ligand contact to K(+). L-methionine-binding residues include Glu58 and Gln102. The tract at residues 102 to 112 is flexible loop; that stretch reads QSADIAQGVDA. Residues 167–169, Asp241, 247–248, Ala264, and Lys268 contribute to the ATP site; these read DAK and RK. Position 241 (Asp241) interacts with L-methionine. An L-methionine-binding site is contributed by Lys272.

Belongs to the AdoMet synthase family. In terms of assembly, homotetramer; dimer of dimers. Requires Mg(2+) as cofactor. It depends on K(+) as a cofactor.

The protein localises to the cytoplasm. The enzyme catalyses L-methionine + ATP + H2O = S-adenosyl-L-methionine + phosphate + diphosphate. The protein operates within amino-acid biosynthesis; S-adenosyl-L-methionine biosynthesis; S-adenosyl-L-methionine from L-methionine: step 1/1. Its function is as follows. Catalyzes the formation of S-adenosylmethionine (AdoMet) from methionine and ATP. The overall synthetic reaction is composed of two sequential steps, AdoMet formation and the subsequent tripolyphosphate hydrolysis which occurs prior to release of AdoMet from the enzyme. In Parvibaculum lavamentivorans (strain DS-1 / DSM 13023 / NCIMB 13966), this protein is S-adenosylmethionine synthase.